We begin with the raw amino-acid sequence, 399 residues long: L-methionine gamma-lyase (399 aa).

Pyridoxal 5'-phosphate contacts are provided by residues 59–61 (YTR) and 89–90 (GM). Position 114 (Tyr114) interacts with substrate. 209–211 (SAT) serves as a coordination point for pyridoxal 5'-phosphate. N6-(pyridoxal phosphate)lysine is present on Lys212. Substrate is bound at residue Arg376.

This sequence belongs to the trans-sulfuration enzymes family. L-methionine gamma-lyase subfamily. Homotetramer; dimer of active dimers. It depends on pyridoxal 5'-phosphate as a cofactor.

It catalyses the reaction L-methionine + H2O = methanethiol + 2-oxobutanoate + NH4(+). Its function is as follows. Catalyzes the alpha,gamma-elimination of L-methionine to produce methanethiol, 2-oxobutanoate and ammonia. This is L-methionine gamma-lyase from Pseudomonas deceptionensis.